Reading from the N-terminus, the 274-residue chain is uncharacterized protein (274 aa).

The next 5 membrane-spanning stretches (helical) occupy residues 9–29 (SLLL…VSIL), 64–84 (WFWH…FFIL), 135–155 (LAGH…ALLL), 165–185 (MSSM…WQNA), and 219–239 (IIVY…LVLG).

This sequence belongs to the steroid 5-alpha reductase family.

It is found in the endoplasmic reticulum membrane. This is an uncharacterized protein from Schizosaccharomyces pombe (strain 972 / ATCC 24843) (Fission yeast).